We begin with the raw amino-acid sequence, 349 residues long: UDP-galactose/UDP-glucose transporter 4 (349 aa).

The next 8 membrane-spanning stretches (helical) occupy residues 23–43, 56–76, 115–135, 140–160, 167–187, 205–225, 248–268, and 293–313; these read WQQF…NGIC, GWYF…MYGF, IMFK…IPGL, PVHE…FTLA, NFSI…AFLG, MLFC…ILTG, AMAT…FGAA, and LTEQ…LKMV. Positions 316 to 349 are disordered; that stretch reads PNPNPKSSGSGQTPGKLERVKFEKEDDEESRPLV. Residues 340 to 349 show a composition bias toward acidic residues; that stretch reads EDDEESRPLV.

Belongs to the nucleotide-sugar transporter family. UDP-galactose:UMP antiporter (TC 2.A.7.11) subfamily.

The protein localises to the membrane. Its function is as follows. Sugar transporter involved in the transport of nucleotide-sugars from cytoplasm into the Golgi and/or the endoplasmic reticulum. The protein is UDP-galactose/UDP-glucose transporter 4 of Arabidopsis thaliana (Mouse-ear cress).